We begin with the raw amino-acid sequence, 183 residues long: Holliday junction branch migration complex subunit RuvA (183 aa).

The tract at residues 1-63 (MTVGLIGVVE…EDAHLLYGFL (63 aa)) is domain I. The tract at residues 64–141 (EESEKILFER…IQDETKPVHN (78 aa)) is domain II. Position 141 (Asn-141) is a region of interest, flexible linker. A domain III region spans residues 141 to 183 (NEAFLALESLGFKSAEINPILKKLKPNLSVEEAIKEALQQLRS).

Belongs to the RuvA family. As to quaternary structure, homotetramer. Forms an RuvA(8)-RuvB(12)-Holliday junction (HJ) complex. HJ DNA is sandwiched between 2 RuvA tetramers; dsDNA enters through RuvA and exits via RuvB. An RuvB hexamer assembles on each DNA strand where it exits the tetramer. Each RuvB hexamer is contacted by two RuvA subunits (via domain III) on 2 adjacent RuvB subunits; this complex drives branch migration. In the full resolvosome a probable DNA-RuvA(4)-RuvB(12)-RuvC(2) complex forms which resolves the HJ.

It localises to the cytoplasm. Functionally, the RuvA-RuvB-RuvC complex processes Holliday junction (HJ) DNA during genetic recombination and DNA repair, while the RuvA-RuvB complex plays an important role in the rescue of blocked DNA replication forks via replication fork reversal (RFR). RuvA specifically binds to HJ cruciform DNA, conferring on it an open structure. The RuvB hexamer acts as an ATP-dependent pump, pulling dsDNA into and through the RuvAB complex. HJ branch migration allows RuvC to scan DNA until it finds its consensus sequence, where it cleaves and resolves the cruciform DNA. This Helicobacter acinonychis (strain Sheeba) protein is Holliday junction branch migration complex subunit RuvA.